Consider the following 230-residue polypeptide: Extracellular ribonuclease LE (230 aa).

A signal peptide spans 1–25 (MASNSAFSLFLILLIITQCLSVLNA). Q37 serves as a coordination point for RNA. 5 disulfide bridges follow: C43–C49, C50–C106, C79–C125, C186–C221, and C202–C213. Residues H64, F114, 117–118 (HE), and 121–122 (KH) each bind RNA. Catalysis depends on H64, which acts as the Proton donor. E118 is a catalytic residue. Catalysis depends on H122, which acts as the Proton acceptor.

Belongs to the RNase T2 family.

It localises to the secreted. It is found in the extracellular space. The protein localises to the cell wall. The enzyme catalyses a ribonucleotidyl-ribonucleotide-RNA + H2O = a 3'-end 3'-phospho-ribonucleotide-RNA + a 5'-end dephospho-ribonucleoside-RNA + H(+). Its function is as follows. Probably involved in plant phosphate-starvation rescue system. The protein is Extracellular ribonuclease LE of Solanum lycopersicum (Tomato).